A 215-amino-acid chain; its full sequence is Probable phosphoglycerate mutase GpmB (215 aa).

Residues 8-15 (RHGETEWN), 21-22 (QG), Arg58, Arg60, 82-85 (ELHM), and 151-152 (GI) contribute to the substrate site. His9 functions as the Tele-phosphohistidine intermediate in the catalytic mechanism. The active-site Proton donor/acceptor is the Glu82.

This sequence belongs to the phosphoglycerate mutase family. GpmB subfamily.

The catalysed reaction is (2R)-2-phosphoglycerate = (2R)-3-phosphoglycerate. The protein operates within carbohydrate degradation; glycolysis; pyruvate from D-glyceraldehyde 3-phosphate: step 3/5. This chain is Probable phosphoglycerate mutase GpmB, found in Serratia proteamaculans (strain 568).